The following is a 202-amino-acid chain: Chromophore lyase CpcT/CpeT 2 (202 aa).

The protein belongs to the CpcT/CpeT biliprotein lyase family.

Covalently attaches a chromophore to Cys residue(s) of phycobiliproteins. In Gloeobacter violaceus (strain ATCC 29082 / PCC 7421), this protein is Chromophore lyase CpcT/CpeT 2.